Here is a 546-residue protein sequence, read N- to C-terminus: Glucose-6-phosphate isomerase (546 aa).

Glu355 acts as the Proton donor in catalysis. Residues His386 and Lys510 contribute to the active site.

Belongs to the GPI family.

The protein resides in the cytoplasm. It carries out the reaction alpha-D-glucose 6-phosphate = beta-D-fructose 6-phosphate. Its pathway is carbohydrate biosynthesis; gluconeogenesis. The protein operates within carbohydrate degradation; glycolysis; D-glyceraldehyde 3-phosphate and glycerone phosphate from D-glucose: step 2/4. Functionally, catalyzes the reversible isomerization of glucose-6-phosphate to fructose-6-phosphate. This is Glucose-6-phosphate isomerase from Buchnera aphidicola subsp. Cinara cedri (strain Cc).